A 321-amino-acid polypeptide reads, in one-letter code: Glucokinase (321 aa).

Position 8-13 (8-13) interacts with ATP; it reads GDVGGT.

It belongs to the bacterial glucokinase family.

Its subcellular location is the cytoplasm. The enzyme catalyses D-glucose + ATP = D-glucose 6-phosphate + ADP + H(+). The polypeptide is Glucokinase (Escherichia coli O127:H6 (strain E2348/69 / EPEC)).